A 256-amino-acid polypeptide reads, in one-letter code: Thioredoxin-dependent peroxide reductase, mitochondrial (256 aa).

The transit peptide at 1–61 (MAAAVGRLLR…KLFSTSSSCH (61 aa)) directs the protein to the mitochondrion. A Thioredoxin domain is found at 63–221 (PAVTQHAPYF…TLRLVKAFQY (159 aa)). K83 carries the N6-succinyllysine modification. K91 carries the N6-acetyllysine; alternate modification. The residue at position 91 (K91) is an N6-succinyllysine; alternate. C108 (cysteine sulfenic acid (-SOH) intermediate) is an active-site residue. Phosphothreonine is present on T146.

It belongs to the peroxiredoxin family. AhpC/Prx1 subfamily. In terms of assembly, homodimer; disulfide-linked, upon oxidation. 6 homodimers assemble to form a ring-like dodecamer. Interacts with NEK6. Interacts with LRRK2. Interacts with MAP3K13. Interacts with RPS6KC1 (via PX domain). In terms of processing, phosphorylated by LRRK2; phosphorylation reduces perodixase activity. The enzyme can be inactivated by further oxidation of the cysteine sulfenic acid (C(P)-SOH) to sulphinic acid (C(P)-SO2H) and sulphonic acid (C(P)-SO3H) instead of its condensation to a disulfide bond. Post-translationally, S-palmitoylated.

It localises to the mitochondrion. The protein localises to the cytoplasm. Its subcellular location is the early endosome. The enzyme catalyses a hydroperoxide + [thioredoxin]-dithiol = an alcohol + [thioredoxin]-disulfide + H2O. Its function is as follows. Thiol-specific peroxidase that catalyzes the reduction of hydrogen peroxide and organic hydroperoxides to water and alcohols, respectively. Plays a role in cell protection against oxidative stress by detoxifying peroxides. Acts synergistically with MAP3K13 to regulate the activation of NF-kappa-B in the cytosol. Required for the maintenance of physical strength. The chain is Thioredoxin-dependent peroxide reductase, mitochondrial (PRDX3) from Homo sapiens (Human).